Reading from the N-terminus, the 335-residue chain is Foldase protein PrsA (335 aa).

Residues 1 to 22 form the signal peptide; that stretch reads MRSAKKLLSVLCLGVFILTFTA. Cysteine 23 carries N-palmitoyl cysteine lipidation. Residue cysteine 23 is the site of S-diacylglycerol cysteine attachment. In terms of domain architecture, PpiC spans 194-285; that stretch reads PNTMNVSHIL…FGYHIIKINS (92 aa).

It belongs to the PrsA family.

It is found in the cell membrane. The catalysed reaction is [protein]-peptidylproline (omega=180) = [protein]-peptidylproline (omega=0). Its function is as follows. Plays a major role in protein secretion by helping the post-translocational extracellular folding of several secreted proteins. This chain is Foldase protein PrsA, found in Clostridium botulinum (strain Loch Maree / Type A3).